Consider the following 196-residue polypeptide: FMN-dependent NADH:quinone oxidoreductase (196 aa).

FMN is bound at residue Ser10.

This sequence belongs to the azoreductase type 1 family. As to quaternary structure, homodimer. It depends on FMN as a cofactor.

It carries out the reaction 2 a quinone + NADH + H(+) = 2 a 1,4-benzosemiquinone + NAD(+). The catalysed reaction is N,N-dimethyl-1,4-phenylenediamine + anthranilate + 2 NAD(+) = 2-(4-dimethylaminophenyl)diazenylbenzoate + 2 NADH + 2 H(+). Quinone reductase that provides resistance to thiol-specific stress caused by electrophilic quinones. Functionally, also exhibits azoreductase activity. Catalyzes the reductive cleavage of the azo bond in aromatic azo compounds to the corresponding amines. The chain is FMN-dependent NADH:quinone oxidoreductase from Cereibacter sphaeroides (strain ATCC 17023 / DSM 158 / JCM 6121 / CCUG 31486 / LMG 2827 / NBRC 12203 / NCIMB 8253 / ATH 2.4.1.) (Rhodobacter sphaeroides).